Reading from the N-terminus, the 1040-residue chain is Multidrug resistance protein MdtB (1040 aa).

Helical transmembrane passes span 16–36 (FIMR…AGII), 347–367 (LMMA…NIPA), 369–389 (IIPG…MVFL), 396–416 (LTLM…IVVI), 440–460 (IGFT…PLLF), 472–492 (FAIT…TLTP), 537–557 (WLTL…WVFI), 863–883 (LGST…VLGI), 888–908 (FIHP…ALLA), 911–931 (IAGS…IGIV), 968–988 (ILMT…STGV), and 998–1018 (IGMV…TPVI).

The protein belongs to the resistance-nodulation-cell division (RND) (TC 2.A.6) family. MdtB subfamily. In terms of assembly, part of a tripartite efflux system composed of MdtA, MdtB and MdtC. MdtB forms a heteromultimer with MdtC.

Its subcellular location is the cell inner membrane. In Shigella boydii serotype 18 (strain CDC 3083-94 / BS512), this protein is Multidrug resistance protein MdtB.